The following is a 155-amino-acid chain: Small ribosomal subunit protein uS7 (155 aa).

This sequence belongs to the universal ribosomal protein uS7 family. In terms of assembly, part of the 30S ribosomal subunit. Contacts proteins S9 and S11.

In terms of biological role, one of the primary rRNA binding proteins, it binds directly to 16S rRNA where it nucleates assembly of the head domain of the 30S subunit. Is located at the subunit interface close to the decoding center, probably blocks exit of the E-site tRNA. The protein is Small ribosomal subunit protein uS7 of Mycoplasma capricolum subsp. capricolum (strain California kid / ATCC 27343 / NCTC 10154).